The sequence spans 97 residues: Integration host factor subunit alpha (97 aa).

The disordered stretch occupies residues 50–71 (FGNFTLRDKPQRPGRNPKTGEE).

It belongs to the bacterial histone-like protein family. In terms of assembly, heterodimer of an alpha and a beta chain.

In terms of biological role, this protein is one of the two subunits of integration host factor, a specific DNA-binding protein that functions in genetic recombination as well as in transcriptional and translational control. In Legionella pneumophila (strain Paris), this protein is Integration host factor subunit alpha.